The sequence spans 101 residues: Phosphoribosyl-AMP cyclohydrolase (101 aa).

Mg(2+) is bound at residue aspartate 71. Residue cysteine 72 coordinates Zn(2+). 2 residues coordinate Mg(2+): aspartate 73 and aspartate 75. Cysteine 88 and cysteine 95 together coordinate Zn(2+).

It belongs to the PRA-CH family. In terms of assembly, homodimer. It depends on Mg(2+) as a cofactor. Requires Zn(2+) as cofactor.

The protein resides in the cytoplasm. It carries out the reaction 1-(5-phospho-beta-D-ribosyl)-5'-AMP + H2O = 1-(5-phospho-beta-D-ribosyl)-5-[(5-phospho-beta-D-ribosylamino)methylideneamino]imidazole-4-carboxamide. It functions in the pathway amino-acid biosynthesis; L-histidine biosynthesis; L-histidine from 5-phospho-alpha-D-ribose 1-diphosphate: step 3/9. Functionally, catalyzes the hydrolysis of the adenine ring of phosphoribosyl-AMP. The chain is Phosphoribosyl-AMP cyclohydrolase from Bacillus cereus (strain ATCC 10987 / NRS 248).